The sequence spans 152 residues: Acidic phospholipase A2 homolog textilotoxin D chain (152 aa).

The signal sequence occupies residues 1-19 (MHPAHLLVLLGVCVSLLGA). Intrachain disulfides connect Cys-38-Cys-104, Cys-54-Cys-151, Cys-56-Cys-72, Cys-71-Cys-132, Cys-78-Cys-125, Cys-88-Cys-118, and Cys-111-Cys-123. Asn-112 is a glycosylation site (N-linked (GlcNAc...) asparagine).

Belongs to the phospholipase A2 family. Group I subfamily. D49 sub-subfamily. Heterohexamer. 2 forms exist: 2 A or 2 B chains, 2 C chains and 2 covalently-linked D chains, and 1 A or 1 B, 1 C, 2 covalently-linked D chains and 2 differentially glycosylated covalently-linked D chains. Textilotoxin was originally described as pentameric. Expressed by the venom gland.

It localises to the secreted. Functionally, snake venom oligomeric phospholipase A2 that has potent presynaptic neurotoxicity. Chain D is not itself neurotoxic, but it is essential for the neurotoxicity of textilotoxin. Chain D possesses a very low phospholipase activity. The protein is Acidic phospholipase A2 homolog textilotoxin D chain of Pseudonaja textilis (Eastern brown snake).